Consider the following 629-residue polypeptide: Aspartate--tRNA(Asp/Asn) ligase (629 aa).

Residues 1–24 are disordered; the sequence is MERSSRADLISEDSHPARTHTCGD. The segment covering 12 to 24 has biased composition (basic and acidic residues); sequence EDSHPARTHTCGD. An L-aspartate-binding site is contributed by Glu194. The aspartate stretch occupies residues 218–221; it reads QTYK. Arg240 contacts L-aspartate. Residues 240-242 and Gln249 contribute to the ATP site; that span reads RDE. An L-aspartate-binding site is contributed by His474. Glu508 lines the ATP pocket. Arg515 contributes to the L-aspartate binding site. Position 560–563 (560–563) interacts with ATP; it reads GLDR.

This sequence belongs to the class-II aminoacyl-tRNA synthetase family. Type 1 subfamily. In terms of assembly, homodimer.

It is found in the cytoplasm. It carries out the reaction tRNA(Asx) + L-aspartate + ATP = L-aspartyl-tRNA(Asx) + AMP + diphosphate. Functionally, aspartyl-tRNA synthetase with relaxed tRNA specificity since it is able to aspartylate not only its cognate tRNA(Asp) but also tRNA(Asn). Reaction proceeds in two steps: L-aspartate is first activated by ATP to form Asp-AMP and then transferred to the acceptor end of tRNA(Asp/Asn). The polypeptide is Aspartate--tRNA(Asp/Asn) ligase (Salinibacter ruber (strain DSM 13855 / M31)).